We begin with the raw amino-acid sequence, 184 residues long: Non-fimbrial adhesin 1 (184 aa).

Residues 1–28 form the signal peptide; that stretch reads MKAKKYENQIYNENGRRCQRHGRRLAIA. A disulfide bridge links C57 with C91.

Forms a polymeric structure, which disintegrates with elevated temperature into a monomer but with some relatively stable dimers.

This chain is Non-fimbrial adhesin 1 (nfaA), found in Escherichia coli.